Consider the following 232-residue polypeptide: RNA chaperone ProQ (232 aa).

The segment at 105 to 182 (EAKARVQAQR…REEQHTPVSD (78 aa)) is disordered. Residues 117-136 (QQAKKREAAAAAGEKEDAPR) are compositionally biased toward basic and acidic residues. The span at 137–146 (RERKPRPTTP) shows a compositional bias: basic residues. Residues 147–177 (RRKEGAERKPRAQKPVEKAPKTVKAPREEQH) are compositionally biased toward basic and acidic residues.

Belongs to the ProQ family.

Its subcellular location is the cytoplasm. RNA chaperone with significant RNA binding, RNA strand exchange and RNA duplexing activities. May regulate ProP activity through an RNA-based, post-transcriptional mechanism. This Escherichia coli (strain ATCC 8739 / DSM 1576 / NBRC 3972 / NCIMB 8545 / WDCM 00012 / Crooks) protein is RNA chaperone ProQ.